Consider the following 503-residue polypeptide: ATP synthase subunit alpha (503 aa).

170 to 177 (GDRQTGKT) is an ATP binding site.

It belongs to the ATPase alpha/beta chains family. F-type ATPases have 2 components, CF(1) - the catalytic core - and CF(0) - the membrane proton channel. CF(1) has five subunits: alpha(3), beta(3), gamma(1), delta(1), epsilon(1). CF(0) has three main subunits: a(1), b(2) and c(9-12). The alpha and beta chains form an alternating ring which encloses part of the gamma chain. CF(1) is attached to CF(0) by a central stalk formed by the gamma and epsilon chains, while a peripheral stalk is formed by the delta and b chains.

Its subcellular location is the cell inner membrane. The enzyme catalyses ATP + H2O + 4 H(+)(in) = ADP + phosphate + 5 H(+)(out). In terms of biological role, produces ATP from ADP in the presence of a proton gradient across the membrane. The alpha chain is a regulatory subunit. The sequence is that of ATP synthase subunit alpha from Thermotoga neapolitana (strain ATCC 49049 / DSM 4359 / NBRC 107923 / NS-E).